We begin with the raw amino-acid sequence, 606 residues long: NADH-ubiquinone oxidoreductase chain 5 (606 aa).

The next 16 membrane-spanning stretches (helical) occupy residues 1-21, 43-63, 88-108, 117-137, 140-160, 171-191, 209-229, 241-261, 273-293, 310-330, 366-386, 413-433, 457-477, 488-508, 513-533, and 582-602; these read MNLFTPLMLTAMFILLLPIIM, AFIISMIPTMMFISSGQEAII, IFIPVALFVTWSIMEFSMWYM, FFKYLLMFLITMMILVTANNL, LFIGWEGVGIMSFLLIGWWYG, AILYNRIGDVGFIMAMAWFLT, LNIPLLGLLLAATGKSAQFGL, TPVSALLHSSTMVVAGVFLLI, MQTLTLCLGAITTLFTAICAL, LGLMIVTIGINQPYLAFLHIC, MPFTTTSLIIGSLALTGMPFL, LIATSLTAAYSTRIMFFVLLG, LLIGSIFAGYLISYNIPPTTI, LTALAVTIAGFILALELNLAA, FMYPSNLFKFSNLLGYFPIVM, and GLVKLYFLSFMITLALSLILL.

This sequence belongs to the complex I subunit 5 family. In terms of assembly, core subunit of respiratory chain NADH dehydrogenase (Complex I) which is composed of 45 different subunits.

It localises to the mitochondrion inner membrane. It catalyses the reaction a ubiquinone + NADH + 5 H(+)(in) = a ubiquinol + NAD(+) + 4 H(+)(out). Core subunit of the mitochondrial membrane respiratory chain NADH dehydrogenase (Complex I) which catalyzes electron transfer from NADH through the respiratory chain, using ubiquinone as an electron acceptor. Essential for the catalytic activity and assembly of complex I. The polypeptide is NADH-ubiquinone oxidoreductase chain 5 (MT-ND5) (Felis catus (Cat)).